We begin with the raw amino-acid sequence, 522 residues long: Sorting nexin-1 (522 aa).

Disordered stretches follow at residues 1–89 (MASG…QDLF) and 115–142 (SLPP…QEDQ). Phosphoserine is present on residues Ser32 and Ser39. The span at 35-45 (EAGDSDTEGED) shows a compositional bias: acidic residues. Residues Thr41 and Thr48 each carry the phosphothreonine modification. Ser58 and Ser72 each carry phosphoserine. Polar residues predominate over residues 60 to 73 (KRTTSLLPINNGSK). Residues 132-142 (EELEEEEQEDQ) are compositionally biased toward acidic residues. Residues 143 to 272 (FDLTVGITDP…EFLEKEELPR (130 aa)) form the PX domain. Residues Arg186, Ser188, and Lys214 each coordinate a 1,2-diacyl-sn-glycero-3-phospho-(1D-myo-inositol-3-phosphate). Ser188 bears the Phosphoserine mark. Residue Lys237 is modified to N6-acetyllysine. Arg238 contributes to the a 1,2-diacyl-sn-glycero-3-phospho-(1D-myo-inositol-3-phosphate) binding site. Phosphoserine is present on Ser280. The segment at 281 to 298 (GAGLLKMFNKATDAVSKM) is membrane-binding amphipathic helix. The BAR domain maps to 302–522 (MNESDIWFEE…AFLPEAKAIS (221 aa)).

This sequence belongs to the sorting nexin family. Predominantly forms heterodimers with BAR domain-containing sorting nexins SNX5, SNX6 and SNX32; can self-associate to form homodimers. The heterodimers are proposed to self-assemble into helical arrays on the membrane to stabilize and expand local membrane curvature underlying endosomal tubule formation. Thought to be a component of the originally described retromer complex (also called SNX-BAR retromer) which is a pentamer containing the heterotrimeric retromer cargo-selective complex (CSC), also described as vacuolar protein sorting subcomplex (VPS) and a heterodimeric membrane-deforming subcomplex formed between SNX1 or SNX2 and SNX5 or SNX6 (also called SNX-BAR subcomplex); the respective CSC and SNX-BAR subcomplexes associate with low affinity. Interacts with SNX5, SNX6, SNX32, VPS26A, VPS29, VPS35, DRD5, DENND5A, KALRN, RHOG (GDP-bound form). The interaction with SNX2 is reported controversially. Interacts with DNAJC13; prevented by presence of HGS. Interacts with HGS.

Its subcellular location is the endosome membrane. It localises to the golgi apparatus. It is found in the trans-Golgi network membrane. The protein resides in the early endosome membrane. The protein localises to the cell projection. Its subcellular location is the lamellipodium. In terms of biological role, involved in several stages of intracellular trafficking. Interacts with membranes containing phosphatidylinositol 3-phosphate (PtdIns(3P)) or phosphatidylinositol 3,5-bisphosphate (PtdIns(3,5)P2). Acts in part as component of the retromer membrane-deforming SNX-BAR subcomplex. The SNX-BAR retromer mediates retrograde transport of cargo proteins from endosomes to the trans-Golgi network (TGN) and is involved in endosome-to-plasma membrane transport for cargo protein recycling. The SNX-BAR subcomplex functions to deform the donor membrane into a tubular profile called endosome-to-TGN transport carrier (ETC). Can sense membrane curvature and has in vitro vesicle-to-membrane remodeling activity. Involved in retrograde endosome-to-TGN transport of lysosomal enzyme receptors (IGF2R, M6PR and SORT1). Plays a role in targeting ligand-activated EGFR to the lysosomes for degradation after endocytosis from the cell surface and release from the Golgi. Involvement in retromer-independent endocytic trafficking of P2RY1 and lysosomal degradation of protease-activated receptor-1/F2R. Promotes KALRN- and RHOG-dependent but retromer-independent membrane remodeling such as lamellipodium formation; the function is dependent on GEF activity of KALRN. Required for endocytosis of DRD5 upon agonist stimulation but not for basal receptor trafficking. This Macaca fascicularis (Crab-eating macaque) protein is Sorting nexin-1 (SNX1).